Here is a 512-residue protein sequence, read N- to C-terminus: Glucose-1-phosphate adenylyltransferase small subunit 2, chloroplastic (512 aa).

The segment at 1–21 (MAAIGVLKVPPSSSSSSSSSS) is disordered. Residues 1–63 (MAAIGVLKVP…RNPFIVSPKA (63 aa)) constitute a chloroplast transit peptide. Over residues 12 to 21 (SSSSSSSSSS) the composition is skewed to low complexity.

It belongs to the bacterial/plant glucose-1-phosphate adenylyltransferase family. Heterotetramer. Leaves and seeds.

The protein resides in the plastid. Its subcellular location is the chloroplast. The catalysed reaction is alpha-D-glucose 1-phosphate + ATP + H(+) = ADP-alpha-D-glucose + diphosphate. It participates in glycan biosynthesis; starch biosynthesis. With respect to regulation, activated by 3'phosphoglycerate, inhibited by orthophosphate. Allosteric regulation. Functionally, this protein plays a role in synthesis of starch. It catalyzes the synthesis of the activated glycosyl donor, ADP-glucose from Glc-1-P and ATP. This chain is Glucose-1-phosphate adenylyltransferase small subunit 2, chloroplastic (AGPP), found in Vicia faba (Broad bean).